A 303-amino-acid polypeptide reads, in one-letter code: Probable 5-dehydro-4-deoxyglucarate dehydratase (303 aa).

Belongs to the DapA family.

The catalysed reaction is 5-dehydro-4-deoxy-D-glucarate + H(+) = 2,5-dioxopentanoate + CO2 + H2O. It functions in the pathway carbohydrate acid metabolism; D-glucarate degradation; 2,5-dioxopentanoate from D-glucarate: step 2/2. This Acinetobacter baumannii (strain AB307-0294) protein is Probable 5-dehydro-4-deoxyglucarate dehydratase.